We begin with the raw amino-acid sequence, 80 residues long: UPF0346 protein LSEI_1394 (80 aa).

Belongs to the UPF0346 family.

The protein is UPF0346 protein LSEI_1394 of Lacticaseibacillus paracasei (strain ATCC 334 / BCRC 17002 / CCUG 31169 / CIP 107868 / KCTC 3260 / NRRL B-441) (Lactobacillus paracasei).